The chain runs to 144 residues: IgW chain C region, secreted form 1/3 (144 aa).

In terms of domain architecture, Ig-like spans 1–82 (VYNQTTAVLG…AGSRFNDRIS (82 aa)). N-linked (GlcNAc...) asparagine glycosylation is found at N3, N43, and N123. C11 and C68 are joined by a disulfide. The segment at 87 to 144 (KGGTINLPVPGGNTPCTCPPCSCSGCMPKLVYQTDLNVTLENGGQLQYNCHQQACKIK) is secretory tail.

Expressed mainly in lymphoid tissues including spleen, epigonal organ and circulating lymphocytes.

It localises to the secreted. The sequence is that of IgW chain C region, secreted form 1/3 from Heterodontus francisci (Horn shark).